A 111-amino-acid chain; its full sequence is NADH-ubiquinone oxidoreductase chain 3 (111 aa).

Transmembrane regions (helical) follow at residues 2–22, 54–74, and 82–102; these read ILIW…GMFV, FFVI…LLPM, and PTTY…FYEW.

Belongs to the complex I subunit 3 family.

It is found in the mitochondrion membrane. It catalyses the reaction a ubiquinone + NADH + 5 H(+)(in) = a ubiquinol + NAD(+) + 4 H(+)(out). Core subunit of the mitochondrial membrane respiratory chain NADH dehydrogenase (Complex I) that is believed to belong to the minimal assembly required for catalysis. Complex I functions in the transfer of electrons from NADH to the respiratory chain. The immediate electron acceptor for the enzyme is believed to be ubiquinone. The sequence is that of NADH-ubiquinone oxidoreductase chain 3 (ND3) from Artemia franciscana (Brine shrimp).